We begin with the raw amino-acid sequence, 350 residues long: Protein TRIGALACTOSYLDIACYLGLYCEROL 1, chloroplastic (350 aa).

The disordered stretch occupies residues 67–86; sequence SMSMLEEETSTENNAPSQEA. The helical transmembrane segment at 98–117 threads the bilayer; that stretch reads YIWRGLSVPIIAGQVVLRIL. Over 118 to 136 the chain is Stromal; the sequence is KGKIHWRNTLQQLERTGPK. Residues 137-157 traverse the membrane as a helical segment; the sequence is SLGVCLLTSTFVGMAFTIQFV. Over 158-168 the chain is Chloroplast intermembrane; that stretch reads REFTRLGLNRS. A helical membrane pass occupies residues 169-189; sequence IGGVLALAFSRELSPVITSIV. Residues 190–229 lie on the Stromal side of the membrane; it reads VAGRMGSAFAAELGTMQVSEQTDTLRVLGADPIDYLITPR. The helical transmembrane segment at 230–250 threads the bilayer; it reads VIASCLALPFLTLMCFTVGMA. Residues 251–288 are Chloroplast intermembrane-facing; the sequence is SSALLSDAVYGISINIIMDSAHRALRPWDIVSAMIKSQ. Residues 289-309 traverse the membrane as a helical segment; sequence VFGAIISVISCSWGVTTTGGA. The Stromal segment spans residues 310–318; it reads KGVGESTTS. The chain crosses the membrane as a helical span at residues 319-339; the sequence is AVVMSLVGIFIADFVLSSFFF. The Chloroplast intermembrane segment spans residues 340 to 350; sequence QGAGDSLKNCV.

Belongs to the MlaE permease family. As to quaternary structure, permease subunit of the TGD complex, a lipid translocator at the inner chloroplast envelope membrane made of TGD1, TGD2 and TGD3. Interacts with TGD2 and TGD3 with an overall subunit stoichiometry of 2 TGD1, 2 TGD3 and 8 to 12 TGD2. Interacts with TGD5. As to expression, high levels in green tissues, but low levels in nongreen tissues such as roots.

The protein localises to the plastid. The protein resides in the chloroplast inner membrane. Required during embryogenesis. Permease involved in lipid transfer from the endoplasmic reticulum (ER) to plastids, and necessary for thylakoids formation. In Arabidopsis thaliana (Mouse-ear cress), this protein is Protein TRIGALACTOSYLDIACYLGLYCEROL 1, chloroplastic.